A 383-amino-acid chain; its full sequence is 8-amino-7-oxononanoate synthase (383 aa).

Position 23 (Arg23) interacts with substrate. Pyridoxal 5'-phosphate is bound at residue 110–111 (GF). His135 contributes to the substrate binding site. Pyridoxal 5'-phosphate-binding residues include Ser181, His209, and Thr235. Residue Lys238 is modified to N6-(pyridoxal phosphate)lysine. A substrate-binding site is contributed by Thr351.

Belongs to the class-II pyridoxal-phosphate-dependent aminotransferase family. BioF subfamily. In terms of assembly, homodimer. Requires pyridoxal 5'-phosphate as cofactor.

It carries out the reaction 6-carboxyhexanoyl-[ACP] + L-alanine + H(+) = (8S)-8-amino-7-oxononanoate + holo-[ACP] + CO2. The protein operates within cofactor biosynthesis; biotin biosynthesis. In terms of biological role, catalyzes the decarboxylative condensation of pimeloyl-[acyl-carrier protein] and L-alanine to produce 8-amino-7-oxononanoate (AON), [acyl-carrier protein], and carbon dioxide. This is 8-amino-7-oxononanoate synthase from Aliivibrio fischeri (strain ATCC 700601 / ES114) (Vibrio fischeri).